The sequence spans 149 residues: Ribonuclease H (149 aa).

One can recognise an RNase H type-1 domain in the interval 1 to 143 (MNAVEIYTDG…ADMLANRGVE (143 aa)). Asp-9, Glu-47, Asp-69, and Asp-135 together coordinate Mg(2+).

Belongs to the RNase H family. As to quaternary structure, monomer. The cofactor is Mg(2+).

It is found in the cytoplasm. The enzyme catalyses Endonucleolytic cleavage to 5'-phosphomonoester.. Functionally, endonuclease that specifically degrades the RNA of RNA-DNA hybrids. The polypeptide is Ribonuclease H (Albidiferax ferrireducens (strain ATCC BAA-621 / DSM 15236 / T118) (Rhodoferax ferrireducens)).